Reading from the N-terminus, the 377-residue chain is Putative glutamate--cysteine ligase 2 (377 aa).

The protein belongs to the glutamate--cysteine ligase type 2 family. YbdK subfamily.

It catalyses the reaction L-cysteine + L-glutamate + ATP = gamma-L-glutamyl-L-cysteine + ADP + phosphate + H(+). ATP-dependent carboxylate-amine ligase which exhibits weak glutamate--cysteine ligase activity. This is Putative glutamate--cysteine ligase 2 from Chromobacterium violaceum (strain ATCC 12472 / DSM 30191 / JCM 1249 / CCUG 213 / NBRC 12614 / NCIMB 9131 / NCTC 9757 / MK).